Reading from the N-terminus, the 66-residue chain is Large ribosomal subunit protein bL33c (66 aa).

The protein belongs to the bacterial ribosomal protein bL33 family.

It is found in the plastid. The chain is Large ribosomal subunit protein bL33c (rpl33) from Epifagus virginiana (Beechdrops).